A 354-amino-acid polypeptide reads, in one-letter code: MGCVTSQEDKAAVERSKQIDKSLRMDGEKAAREVKLLLLGAGESGKSTIVKQMKIIHEKGYSQEECLQYNPVVYSNAIQSMIAIIKAMGQLKIQFGHPDRAEEARQFFALAGHADEGEMSQELSGIMKRLWKDVGVQECFSRSREYQLNDSAEYYLNALDRISAPGYIPTEQDVLRTRVKTTGIVETHFTFKDLHFKMFDVGGQRSERKKWIHCFEGVTAIIFIVAMSEYDLTLAEDQEMNRMMESMKLFDSICNNKWFTETSIILFLNKKDLFEEKIKKSPLTICFPEYTGANTYEEAAAYIQLQFENLNKKKDTKEIYSHFTCATDTNNVQFVFDAVTDVIIKNNLKDCGLF.

The N-myristoyl glycine moiety is linked to residue Gly2. Cys3 carries the S-palmitoyl cysteine lipid modification. The 323-residue stretch at 32 to 354 (REVKLLLLGA…KNNLKDCGLF (323 aa)) folds into the G-alpha domain. The interval 35-48 (KLLLLGAGESGKST) is G1 motif. GTP is bound by residues 40–47 (GAGESGKS), 175–181 (LRTRVKT), 200–204 (DVGGQ), 269–272 (NKKD), and Ala326. Mg(2+)-binding residues include Ser47 and Thr181. Positions 173–181 (DVLRTRVKT) are G2 motif. Residues 196 to 205 (FKMFDVGGQR) form a G3 motif region. The tract at residues 265-272 (ILFLNKKD) is G4 motif. The tract at residues 324 to 329 (TCATDT) is G5 motif.

The protein belongs to the G-alpha family. G(i/o/t/z) subfamily. In terms of assembly, g proteins are composed of 3 units; alpha, beta and gamma. The alpha chain contains the guanine nucleotide binding site.

Its function is as follows. Guanine nucleotide-binding proteins (G proteins) are involved as modulators or transducers in various transmembrane signaling systems. In Planorbella trivolvis (Marsh rams-horn), this protein is Guanine nucleotide-binding protein G(i) subunit alpha.